The chain runs to 471 residues: 3-isopropylmalate dehydratase large subunit (471 aa).

3 residues coordinate [4Fe-4S] cluster: C347, C407, and C410.

It belongs to the aconitase/IPM isomerase family. LeuC type 1 subfamily. Heterodimer of LeuC and LeuD. [4Fe-4S] cluster serves as cofactor.

The enzyme catalyses (2R,3S)-3-isopropylmalate = (2S)-2-isopropylmalate. The protein operates within amino-acid biosynthesis; L-leucine biosynthesis; L-leucine from 3-methyl-2-oxobutanoate: step 2/4. In terms of biological role, catalyzes the isomerization between 2-isopropylmalate and 3-isopropylmalate, via the formation of 2-isopropylmaleate. The protein is 3-isopropylmalate dehydratase large subunit of Prochlorococcus marinus (strain MIT 9211).